The following is a 363-amino-acid chain: Tetraacyldisaccharide 4'-kinase (363 aa).

78–85 provides a ligand contact to ATP; the sequence is TVGGNGKT.

This sequence belongs to the LpxK family.

It carries out the reaction a lipid A disaccharide + ATP = a lipid IVA + ADP + H(+). The protein operates within glycolipid biosynthesis; lipid IV(A) biosynthesis; lipid IV(A) from (3R)-3-hydroxytetradecanoyl-[acyl-carrier-protein] and UDP-N-acetyl-alpha-D-glucosamine: step 6/6. Transfers the gamma-phosphate of ATP to the 4'-position of a tetraacyldisaccharide 1-phosphate intermediate (termed DS-1-P) to form tetraacyldisaccharide 1,4'-bis-phosphate (lipid IVA). This is Tetraacyldisaccharide 4'-kinase from Wigglesworthia glossinidia brevipalpis.